Consider the following 805-residue polypeptide: Leucine--tRNA ligase (805 aa).

The short motif at 40 to 51 (PYPSGSGLHVGH) is the 'HIGH' region element. A 'KMSKS' region motif is present at residues 576 to 580 (KMSKS). Lys579 is an ATP binding site.

This sequence belongs to the class-I aminoacyl-tRNA synthetase family.

It localises to the cytoplasm. The catalysed reaction is tRNA(Leu) + L-leucine + ATP = L-leucyl-tRNA(Leu) + AMP + diphosphate. This chain is Leucine--tRNA ligase, found in Chlorobium phaeovibrioides (strain DSM 265 / 1930) (Prosthecochloris vibrioformis (strain DSM 265)).